Here is a 392-residue protein sequence, read N- to C-terminus: p21-activated protein kinase-interacting protein 1 (392 aa).

WD repeat units lie at residues 40–77, 80–118, 121–160, 202–240, and 243–284; these read AHTA…DHGA, HHNG…CLKS, AHKG…SAFI, TNER…CLSE, and AHEN…KVSP. The disordered stretch occupies residues 309-392; the sequence is TKESPPAAAE…RKKKKIRMMQ (84 aa). The span at 325–351 shows a compositional bias: basic and acidic residues; sequence EQSRRNKEESGHAVQEEEKQPKPDTEK. Polar residues predominate over residues 355-368; the sequence is TGDSNKPTRGNSLV. Residues 381–392 show a composition bias toward basic residues; the sequence is KKRKKKKIRMMQ.

In terms of assembly, interacts with PAK1.

It is found in the nucleus. The protein localises to the nucleolus. In terms of biological role, negatively regulates the PAK1 kinase. PAK1 is a member of the PAK kinase family, which has been shown to play a positive role in the regulation of signaling pathways involving MAPK8 and RELA. PAK1 exists as an inactive homodimer, which is activated by binding of small GTPases such as CDC42 to an N-terminal regulatory domain. PAK1IP1 also binds to the N-terminus of PAK1, and inhibits the specific activation of PAK1 by CDC42. May be involved in ribosomal large subunit assembly. The polypeptide is p21-activated protein kinase-interacting protein 1 (PAK1IP1) (Bos taurus (Bovine)).